A 200-amino-acid chain; its full sequence is Regulator of G-protein signaling 16 (200 aa).

Residues C2 and C12 are each lipidated (S-palmitoyl cysteine). The RGS domain occupies 65 to 181; sequence SFDLLLSSKN…LKSPAYRDLA (117 aa). Y168 and Y177 each carry phosphotyrosine.

Interacts with GNAI1 and GNAQ. Interacts with GNAI3, GNAI3 and GNAO1. As to quaternary structure, (Microbial infection) Interacts with porcine circovirus 2 ORF3 protein. In terms of processing, palmitoylated on Cys-2 and/or Cys-12. Post-translationally, phosphorylated. Phosphorylation at Tyr-168 by EGFR enhances GTPase accelerating (GAP) activity toward GNAI1.

The protein resides in the membrane. In terms of biological role, regulates G protein-coupled receptor signaling cascades. Inhibits signal transduction by increasing the GTPase activity of G protein alpha subunits, thereby driving them into their inactive GDP-bound form. Plays an important role in the phototransduction cascade by regulating the lifetime and effective concentration of activated transducin alpha. May regulate extra and intracellular mitogenic signals. Functionally, (Microbial infection) Gets inactivated and/or degraded by porcine circovirus 2 ORF3 protein, leading to enhanced expression of IL-6 and IL-8 in infected lymphocytes. This would explain chronic inflammatory response of PCV2 infected pigs. The chain is Regulator of G-protein signaling 16 (RGS16) from Sus scrofa (Pig).